The chain runs to 508 residues: MEEYQLYLELDRSRQQDFLYPLVFHEYVYGLAYSHDLNRSIFVENIGYDNKYSLLIVKRLITRMYRQNHLIISANDSNKNRFLRYNKNFDSQIISGGFAIVVEILFSLQLSSSLEEAEIIKSYKNLRSIHSIFPFFEDKVTYLNYISDIQVPYPIHLEILVQILRYWVKDAPFFHLLRLFLYDYCNWNSIIIPKKSIYTFSKNNTRFFFFLYNFYVCEYESIFFFLRTQSSHLRLKSFRFFFERIFFYAKKGHLVEVFVKDFFSTLTFFKDPFIHYVRYQGKSILASKNLPILMNKWKYYFIHLWQCYFDVWSQPGTIHINQLSEYSFHFLGYFLKGGLKHSVVRGQMLQKGFLIKIIIKKLDIIVPIIPIIRLLAKAKFCNVLGNPLSKPSWADLSDFDIIARFLRICRNLSHYYNGSSKKKSLYRIKYILRLSCIKTLACKHKSTVRAFLKRLGSEELLEEFFTEEEEILSLIFPRTPSTLRRLHRNRIWYLDIFFSNDNDLINHD.

It belongs to the intron maturase 2 family. MatK subfamily.

The protein resides in the plastid. It localises to the chloroplast. In terms of biological role, usually encoded in the trnK tRNA gene intron. Probably assists in splicing its own and other chloroplast group II introns. This is Maturase K from Coronilla varia (Crown vetch).